We begin with the raw amino-acid sequence, 98 residues long: Integration host factor subunit alpha (98 aa).

Residues 49–70 form a disordered region; it reads FGNFDLRDKNQRPGRNPKTGED.

Belongs to the bacterial histone-like protein family. Heterodimer of an alpha and a beta chain.

In terms of biological role, this protein is one of the two subunits of integration host factor, a specific DNA-binding protein that functions in genetic recombination as well as in transcriptional and translational control. This Serratia proteamaculans (strain 568) protein is Integration host factor subunit alpha.